The chain runs to 422 residues: Glutamate-1-semialdehyde 2,1-aminomutase (422 aa).

At Lys-258 the chain carries N6-(pyridoxal phosphate)lysine.

This sequence belongs to the class-III pyridoxal-phosphate-dependent aminotransferase family. HemL subfamily. In terms of assembly, homodimer. Pyridoxal 5'-phosphate serves as cofactor.

The protein resides in the cytoplasm. It catalyses the reaction (S)-4-amino-5-oxopentanoate = 5-aminolevulinate. Its pathway is porphyrin-containing compound metabolism; protoporphyrin-IX biosynthesis; 5-aminolevulinate from L-glutamyl-tRNA(Glu): step 2/2. In Chlamydia trachomatis serovar L2 (strain ATCC VR-902B / DSM 19102 / 434/Bu), this protein is Glutamate-1-semialdehyde 2,1-aminomutase.